Consider the following 223-residue polypeptide: von Willebrand factor C domain-containing protein 2-like (223 aa).

Positions 1 to 21 (MGPFLPAICVVLLALNAAVSP) are cleaved as a signal peptide. 2 consecutive VWFC domains span residues 51 to 110 (KGCV…PECK) and 114 to 172 (NFCE…PICK).

It localises to the secreted. Its subcellular location is the synapse. Functionally, may play a role in bone differentiation and matrix mineralization. May play a role in neural development. The sequence is that of von Willebrand factor C domain-containing protein 2-like (vwc2l) from Danio rerio (Zebrafish).